Reading from the N-terminus, the 485-residue chain is Probable cobyric acid synthase (485 aa).

Residues 250-435 enclose the GATase cobBQ-type domain; the sequence is EIEIAVIRLP…LHGLFDNKNI (186 aa). The Nucleophile role is filled by Cys328. Residue His427 is part of the active site.

The protein belongs to the CobB/CobQ family. CobQ subfamily.

It participates in cofactor biosynthesis; adenosylcobalamin biosynthesis. Catalyzes amidations at positions B, D, E, and G on adenosylcobyrinic A,C-diamide. NH(2) groups are provided by glutamine, and one molecule of ATP is hydrogenolyzed for each amidation. This Methanosarcina barkeri (strain Fusaro / DSM 804) protein is Probable cobyric acid synthase.